The sequence spans 340 residues: Holliday junction branch migration complex subunit RuvB (340 aa).

The interval 1 to 184 is large ATPase domain (RuvB-L); that stretch reads MNENLDPTTK…FGISSRLQYY (184 aa). ATP-binding positions include Leu-23, Arg-24, Gly-65, Lys-68, Thr-69, Thr-70, 131-133, Arg-174, Tyr-184, and Arg-221; that span reads EDF. Thr-69 is a Mg(2+) binding site. Positions 185–255 are small ATPAse domain (RuvB-S); it reads STELLTTIVE…ISKYALKALN (71 aa). The segment at 258-340 is head domain (RuvB-H); sequence AHGLDEMDNK…INTNIQGGLF (83 aa). The DNA site is built by Arg-313 and Arg-318.

Belongs to the RuvB family. Homohexamer. Forms an RuvA(8)-RuvB(12)-Holliday junction (HJ) complex. HJ DNA is sandwiched between 2 RuvA tetramers; dsDNA enters through RuvA and exits via RuvB. An RuvB hexamer assembles on each DNA strand where it exits the tetramer. Each RuvB hexamer is contacted by two RuvA subunits (via domain III) on 2 adjacent RuvB subunits; this complex drives branch migration. In the full resolvosome a probable DNA-RuvA(4)-RuvB(12)-RuvC(2) complex forms which resolves the HJ.

The protein localises to the cytoplasm. The catalysed reaction is ATP + H2O = ADP + phosphate + H(+). Its function is as follows. The RuvA-RuvB-RuvC complex processes Holliday junction (HJ) DNA during genetic recombination and DNA repair, while the RuvA-RuvB complex plays an important role in the rescue of blocked DNA replication forks via replication fork reversal (RFR). RuvA specifically binds to HJ cruciform DNA, conferring on it an open structure. The RuvB hexamer acts as an ATP-dependent pump, pulling dsDNA into and through the RuvAB complex. RuvB forms 2 homohexamers on either side of HJ DNA bound by 1 or 2 RuvA tetramers; 4 subunits per hexamer contact DNA at a time. Coordinated motions by a converter formed by DNA-disengaged RuvB subunits stimulates ATP hydrolysis and nucleotide exchange. Immobilization of the converter enables RuvB to convert the ATP-contained energy into a lever motion, pulling 2 nucleotides of DNA out of the RuvA tetramer per ATP hydrolyzed, thus driving DNA branch migration. The RuvB motors rotate together with the DNA substrate, which together with the progressing nucleotide cycle form the mechanistic basis for DNA recombination by continuous HJ branch migration. Branch migration allows RuvC to scan DNA until it finds its consensus sequence, where it cleaves and resolves cruciform DNA. The protein is Holliday junction branch migration complex subunit RuvB of Flavobacterium johnsoniae (strain ATCC 17061 / DSM 2064 / JCM 8514 / BCRC 14874 / CCUG 350202 / NBRC 14942 / NCIMB 11054 / UW101) (Cytophaga johnsonae).